Reading from the N-terminus, the 253-residue chain is Troponin T, fast skeletal muscle isoforms (253 aa).

Residues 1–25 (MSDTEEVEHGEEEYEEEEEVQEEEV) are compositionally biased toward acidic residues. 2 disordered regions span residues 1-58 (MSDT…DIQK) and 97-178 (RAER…VLAE). Ser2 is modified (N-acetylserine). Basic and acidic residues-rich tracts occupy residues 46-58 (PEGEKVDFDDIQK), 97-139 (RAER…DDLK), and 167-178 (TARETKKKVLAE).

Belongs to the troponin T family.

Functionally, troponin T is the tropomyosin-binding subunit of troponin, the thin filament regulatory complex which confers calcium-sensitivity to striated muscle actomyosin ATPase activity. This is Troponin T, fast skeletal muscle isoforms (TNNT3) from Coturnix japonica (Japanese quail).